Here is a 118-residue protein sequence, read N- to C-terminus: uncharacterized protein (118 aa).

The disordered stretch occupies residues 49–80; it reads SKEEHTTSAANLHPRKKKRMPPRRAEKNKAPN. Basic residues predominate over residues 61 to 70; that stretch reads HPRKKKRMPP.

This is an uncharacterized protein from Saccharomyces cerevisiae (strain ATCC 204508 / S288c) (Baker's yeast).